The following is a 393-amino-acid chain: Formate-dependent phosphoribosylglycinamide formyltransferase (393 aa).

Residues 22–23 (EL) and E82 each bind N(1)-(5-phospho-beta-D-ribosyl)glycinamide. ATP-binding positions include R114, K155, 160 to 165 (SSGKGQ), 195 to 198 (EGFI), and E203. An ATP-grasp domain is found at 119 to 308 (RLAAEELDLP…QFALHARAIL (190 aa)). Positions 267 and 279 each coordinate Mg(2+). N(1)-(5-phospho-beta-D-ribosyl)glycinamide-binding positions include D286, K356, and 363–364 (RR).

The protein belongs to the PurK/PurT family. In terms of assembly, homodimer.

It carries out the reaction N(1)-(5-phospho-beta-D-ribosyl)glycinamide + formate + ATP = N(2)-formyl-N(1)-(5-phospho-beta-D-ribosyl)glycinamide + ADP + phosphate + H(+). Its pathway is purine metabolism; IMP biosynthesis via de novo pathway; N(2)-formyl-N(1)-(5-phospho-D-ribosyl)glycinamide from N(1)-(5-phospho-D-ribosyl)glycinamide (formate route): step 1/1. Involved in the de novo purine biosynthesis. Catalyzes the transfer of formate to 5-phospho-ribosyl-glycinamide (GAR), producing 5-phospho-ribosyl-N-formylglycinamide (FGAR). Formate is provided by PurU via hydrolysis of 10-formyl-tetrahydrofolate. The sequence is that of Formate-dependent phosphoribosylglycinamide formyltransferase from Pseudomonas entomophila (strain L48).